An 81-amino-acid chain; its full sequence is Sec-independent protein translocase protein TatA (81 aa).

The chain crosses the membrane as a helical span at residues 1 to 21 (MGGISVWQLLIIAVIVVLLFG). Positions 42 to 81 (AMSDEDSAKNEKDADFEPKSLEKQQQKEAAPETKKDKEQA) are disordered.

Belongs to the TatA/E family. As to quaternary structure, the Tat system comprises two distinct complexes: a TatABC complex, containing multiple copies of TatA, TatB and TatC subunits, and a separate TatA complex, containing only TatA subunits. Substrates initially bind to the TatABC complex, which probably triggers association of the separate TatA complex to form the active translocon.

Its subcellular location is the cell inner membrane. Part of the twin-arginine translocation (Tat) system that transports large folded proteins containing a characteristic twin-arginine motif in their signal peptide across membranes. TatA could form the protein-conducting channel of the Tat system. This is Sec-independent protein translocase protein TatA from Vibrio parahaemolyticus serotype O3:K6 (strain RIMD 2210633).